A 557-amino-acid chain; its full sequence is 2-succinyl-5-enolpyruvyl-6-hydroxy-3-cyclohexene-1-carboxylate synthase (557 aa).

A disordered region spans residues 183–206; that stretch reads YGGTEHPPVAPPLPPRRAPRAAAP.

It belongs to the TPP enzyme family. MenD subfamily. As to quaternary structure, homodimer. Mg(2+) is required as a cofactor. Requires Mn(2+) as cofactor. Thiamine diphosphate serves as cofactor.

The catalysed reaction is isochorismate + 2-oxoglutarate + H(+) = 5-enolpyruvoyl-6-hydroxy-2-succinyl-cyclohex-3-ene-1-carboxylate + CO2. The protein operates within quinol/quinone metabolism; 1,4-dihydroxy-2-naphthoate biosynthesis; 1,4-dihydroxy-2-naphthoate from chorismate: step 2/7. Its pathway is quinol/quinone metabolism; menaquinone biosynthesis. Its function is as follows. Catalyzes the thiamine diphosphate-dependent decarboxylation of 2-oxoglutarate and the subsequent addition of the resulting succinic semialdehyde-thiamine pyrophosphate anion to isochorismate to yield 2-succinyl-5-enolpyruvyl-6-hydroxy-3-cyclohexene-1-carboxylate (SEPHCHC). This chain is 2-succinyl-5-enolpyruvyl-6-hydroxy-3-cyclohexene-1-carboxylate synthase, found in Halorhodospira halophila (strain DSM 244 / SL1) (Ectothiorhodospira halophila (strain DSM 244 / SL1)).